Here is a 1885-residue protein sequence, read N- to C-terminus: Fatty acid synthase subunit alpha (1885 aa).

Positions 92 to 107 (PDPADLAPKETPKQEE) are enriched in basic and acidic residues. The interval 92-140 (PDPADLAPKETPKQEESTPSAPAAATPTPAAAAAPTPAPAPASAGPVES) is disordered. The span at 108-126 (STPSAPAAATPTPAAAAAP) shows a compositional bias: low complexity. The Carrier domain maps to 146–221 (VKANLLIHVL…EQFQDSFSGQ (76 aa)). An O-(pantetheine 4'-phosphoryl)serine modification is found at serine 181. The Ketosynthase family 3 (KS3) domain maps to 1121–1661 (IQEIVVQHDL…QKGAQAVVVH (541 aa)). Residues cysteine 1304, histidine 1546, and histidine 1587 each act as for beta-ketoacyl synthase activity in the active site. Residues aspartate 1771, valine 1772, and glutamate 1773 each contribute to the Mg(2+) site. Acetyl-CoA is bound by residues 1771-1773 (DVE), tyrosine 1797, serine 1807, 1816-1826 (EAVFKALGVES), 1840-1843 (RDVN), and 1870-1872 (ISH). Residues serine 1871 and histidine 1872 each contribute to the Mg(2+) site.

This sequence belongs to the thiolase-like superfamily. Fungal fatty acid synthetase subunit alpha family. In terms of assembly, [Alpha(6)beta(6)] hexamers of two multifunctional subunits (alpha and beta).

It carries out the reaction acetyl-CoA + n malonyl-CoA + 2n NADPH + 4n H(+) = a long-chain-acyl-CoA + n CoA + n CO2 + 2n NADP(+).. It catalyses the reaction a fatty acyl-[ACP] + malonyl-[ACP] + H(+) = a 3-oxoacyl-[ACP] + holo-[ACP] + CO2. The enzyme catalyses a (3R)-hydroxyacyl-[ACP] + NADP(+) = a 3-oxoacyl-[ACP] + NADPH + H(+). In terms of biological role, fatty acid synthetase catalyzes the formation of long-chain fatty acids from acetyl-CoA, malonyl-CoA and NADPH. The alpha subunit contains domains for: acyl carrier protein, 3-oxoacyl-[acyl-carrier-protein] reductase, and 3-oxoacyl-[acyl-carrier-protein] synthase. In Candida albicans (Yeast), this protein is Fatty acid synthase subunit alpha (FAS2).